The following is a 421-amino-acid chain: Gamma-glutamyl phosphate reductase (421 aa).

The protein belongs to the gamma-glutamyl phosphate reductase family.

It is found in the cytoplasm. It carries out the reaction L-glutamate 5-semialdehyde + phosphate + NADP(+) = L-glutamyl 5-phosphate + NADPH + H(+). Its pathway is amino-acid biosynthesis; L-proline biosynthesis; L-glutamate 5-semialdehyde from L-glutamate: step 2/2. Catalyzes the NADPH-dependent reduction of L-glutamate 5-phosphate into L-glutamate 5-semialdehyde and phosphate. The product spontaneously undergoes cyclization to form 1-pyrroline-5-carboxylate. This chain is Gamma-glutamyl phosphate reductase, found in Pseudomonas fluorescens (strain ATCC BAA-477 / NRRL B-23932 / Pf-5).